An 85-amino-acid chain; its full sequence is Toxin To6 (85 aa).

The first 20 residues, 1–20 (MSIFPIILALLLIGLDEGEA), serve as a signal peptide directing secretion. An LCN-type CS-alpha/beta domain is found at 21–83 (LDGYPLSKNN…EMYPGRLPCN (63 aa)). 4 disulfide bridges follow: cysteine 32–cysteine 82, cysteine 36–cysteine 59, cysteine 42–cysteine 64, and cysteine 46–cysteine 66.

In terms of tissue distribution, expressed by the venom gland.

The protein resides in the secreted. Its function is as follows. Beta toxins bind voltage-independently at site-4 of sodium channels (Nav) and shift the voltage of activation toward more negative potentials thereby affecting sodium channel activation and promoting spontaneous and repetitive firing. This is Toxin To6 from Tityus obscurus (Amazonian scorpion).